The chain runs to 87 residues: HssA/B-like protein 55 (87 aa).

Polar residues predominate over residues Met-1 to Pro-13. Residues Met-1–Met-31 form a disordered region. Low complexity predominate over residues Asn-14–Met-31.

The protein belongs to the hssA/B family.

The sequence is that of HssA/B-like protein 55 (hssl55) from Dictyostelium discoideum (Social amoeba).